Here is a 212-residue protein sequence, read N- to C-terminus: ATP phosphoribosyltransferase (212 aa).

Belongs to the ATP phosphoribosyltransferase family. Short subfamily. In terms of assembly, heteromultimer composed of HisG and HisZ subunits.

The protein localises to the cytoplasm. It catalyses the reaction 1-(5-phospho-beta-D-ribosyl)-ATP + diphosphate = 5-phospho-alpha-D-ribose 1-diphosphate + ATP. It functions in the pathway amino-acid biosynthesis; L-histidine biosynthesis; L-histidine from 5-phospho-alpha-D-ribose 1-diphosphate: step 1/9. Functionally, catalyzes the condensation of ATP and 5-phosphoribose 1-diphosphate to form N'-(5'-phosphoribosyl)-ATP (PR-ATP). Has a crucial role in the pathway because the rate of histidine biosynthesis seems to be controlled primarily by regulation of HisG enzymatic activity. The sequence is that of ATP phosphoribosyltransferase from Prochlorococcus marinus (strain MIT 9312).